Consider the following 137-residue polypeptide: ALFAAAGLAAAAPFETRQDYASCPVSTQGDYVWKISEFSGRKPEGTYYNSLSFNIKATNEGTLDFTCSAQADKLEDDKFYPCGENSSMSFAFQSDRNGLLFRQDVSNDITYVATATLPNYCRAGGDGPKDVICQGAS.

A signal peptide spans 1–18 (ALFAAAGLAAAAPFETRQ). One can recognise an AA1-like domain in the interval 28–137 (QGDYVWKISE…PKDVICQGAS (110 aa)). Disulfide bonds link Cys-67–Cys-82 and Cys-121–Cys-133.

This sequence belongs to the ALTA1 family. Homodimer; disulfide-linked.

It localises to the secreted. The sequence is that of Allergen Ste b 1 (alta1) from Stemphylium botryosum (Black stalk rot fungus).